We begin with the raw amino-acid sequence, 261 residues long: Indole-3-glycerol phosphate synthase (261 aa).

Belongs to the TrpC family.

It carries out the reaction 1-(2-carboxyphenylamino)-1-deoxy-D-ribulose 5-phosphate + H(+) = (1S,2R)-1-C-(indol-3-yl)glycerol 3-phosphate + CO2 + H2O. The protein operates within amino-acid biosynthesis; L-tryptophan biosynthesis; L-tryptophan from chorismate: step 4/5. The polypeptide is Indole-3-glycerol phosphate synthase (Burkholderia ambifaria (strain MC40-6)).